A 166-amino-acid chain; its full sequence is 3-isopropylmalate dehydratase small subunit (166 aa).

This sequence belongs to the LeuD family. LeuD type 2 subfamily. As to quaternary structure, heterodimer of LeuC and LeuD.

The enzyme catalyses (2R,3S)-3-isopropylmalate = (2S)-2-isopropylmalate. It participates in amino-acid biosynthesis; L-leucine biosynthesis; L-leucine from 3-methyl-2-oxobutanoate: step 2/4. Functionally, catalyzes the isomerization between 2-isopropylmalate and 3-isopropylmalate, via the formation of 2-isopropylmaleate. The sequence is that of 3-isopropylmalate dehydratase small subunit from Aliarcobacter butzleri (strain RM4018) (Arcobacter butzleri).